A 105-amino-acid chain; its full sequence is Probable molt-inhibiting hormone (105 aa).

Positions 1-28 (MYRMPMRFWLTAVVMVVVGALLLDTASA) are cleaved as a signal peptide. Cystine bridges form between C35-C72, C52-C68, and C55-C81.

Belongs to the arthropod CHH/MIH/GIH/VIH hormone family. As to expression, expressed in the postmolt, intermolt, and premolt stages of the shrimp eyestalks and the brain.

Its subcellular location is the secreted. Inhibits Y-organs where molting hormone (ecdysteroid) is secreted. A molting cycle is initiated when MIH secretion diminishes or stops. The polypeptide is Probable molt-inhibiting hormone (Metapenaeus ensis (Greasyback shrimp)).